Reading from the N-terminus, the 342-residue chain is UDP-3-O-acylglucosamine N-acyltransferase (342 aa).

The Proton acceptor role is filled by His238.

It belongs to the transferase hexapeptide repeat family. LpxD subfamily. Homotrimer.

It carries out the reaction a UDP-3-O-[(3R)-3-hydroxyacyl]-alpha-D-glucosamine + a (3R)-hydroxyacyl-[ACP] = a UDP-2-N,3-O-bis[(3R)-3-hydroxyacyl]-alpha-D-glucosamine + holo-[ACP] + H(+). It participates in bacterial outer membrane biogenesis; LPS lipid A biosynthesis. Its function is as follows. Catalyzes the N-acylation of UDP-3-O-acylglucosamine using 3-hydroxyacyl-ACP as the acyl donor. Is involved in the biosynthesis of lipid A, a phosphorylated glycolipid that anchors the lipopolysaccharide to the outer membrane of the cell. This chain is UDP-3-O-acylglucosamine N-acyltransferase, found in Tolumonas auensis (strain DSM 9187 / NBRC 110442 / TA 4).